The chain runs to 179 residues: MENFNQIFTVLAASEGIGLNLDILETGLLNILALVAILVYTGKDFLGSILQERKSTIVKSVQDAEDRLNEANRRLSEAQKQLSQAHVVISEIRNETKTAKTNLLKSDATTAKKELTTRFNRAISSFRSKERVIFLDVKQQIISLVLKRSAIQAKETFGSKKRARALINETIQKLEGDLL.

Residues 28 to 46 (LLNILALVAILVYTGKDFL) form a helical membrane-spanning segment.

The protein belongs to the ATPase B chain family. As to quaternary structure, F-type ATPases have 2 components, F(1) - the catalytic core - and F(0) - the membrane proton channel. F(1) has five subunits: alpha(3), beta(3), gamma(1), delta(1), epsilon(1). F(0) has four main subunits: a(1), b(1), b'(1) and c(10-14). The alpha and beta chains form an alternating ring which encloses part of the gamma chain. F(1) is attached to F(0) by a central stalk formed by the gamma and epsilon chains, while a peripheral stalk is formed by the delta, b and b' chains.

It localises to the plastid. The protein resides in the chloroplast thylakoid membrane. F(1)F(0) ATP synthase produces ATP from ADP in the presence of a proton or sodium gradient. F-type ATPases consist of two structural domains, F(1) containing the extramembraneous catalytic core and F(0) containing the membrane proton channel, linked together by a central stalk and a peripheral stalk. During catalysis, ATP synthesis in the catalytic domain of F(1) is coupled via a rotary mechanism of the central stalk subunits to proton translocation. In terms of biological role, component of the F(0) channel, it forms part of the peripheral stalk, linking F(1) to F(0). This is ATP synthase subunit b, chloroplastic from Thalassiosira pseudonana (Marine diatom).